The chain runs to 483 residues: Regulatory protein ViaA (483 aa).

It belongs to the ViaA family. In terms of assembly, homodimer. Interacts with RavA.

It localises to the cytoplasm. In terms of biological role, component of the RavA-ViaA chaperone complex, which may act on the membrane to optimize the function of some of the respiratory chains. ViaA stimulates the ATPase activity of RavA. The chain is Regulatory protein ViaA from Salmonella paratyphi A (strain ATCC 9150 / SARB42).